Here is a 293-residue protein sequence, read N- to C-terminus: Heterogeneous nuclear ribonucleoprotein C-like 1 (293 aa).

The RRM domain occupies S16 to E87. Disordered stretches follow at residues A137–G177 and K206–S293. The stretch at G177–S225 forms a coiled coil. Basic and acidic residues-rich tracts occupy residues K206–E222 and M229–S240. Acidic residues-rich tracts occupy residues G242–L267 and K275–R284.

Belongs to the RRM HNRPC family. RALY subfamily.

Its subcellular location is the nucleus. May play a role in nucleosome assembly by neutralizing basic proteins such as A and B core hnRNPs. The protein is Heterogeneous nuclear ribonucleoprotein C-like 1 (HNRNPCL1) of Homo sapiens (Human).